The following is a 192-amino-acid chain: L-2,4-diaminobutyric acid acetyltransferase (192 aa).

The region spanning 31-192 (LFIRKPSPDD…RIGPFQTDQI (162 aa)) is the N-acetyltransferase domain.

Belongs to the acetyltransferase family. EctA subfamily.

The catalysed reaction is L-2,4-diaminobutanoate + acetyl-CoA = (2S)-4-acetamido-2-aminobutanoate + CoA + H(+). Its pathway is amine and polyamine biosynthesis; ectoine biosynthesis; L-ectoine from L-aspartate 4-semialdehyde: step 2/3. Its function is as follows. Catalyzes the acetylation of L-2,4-diaminobutyrate (DABA) to gamma-N-acetyl-alpha,gamma-diaminobutyric acid (ADABA) with acetyl coenzyme A. Does not acetylate amino acids like GABA, L-ornithine, L-lysine and L-aspartate. The protein is L-2,4-diaminobutyric acid acetyltransferase (ectA) of Halomonas elongata (strain ATCC 33173 / DSM 2581 / NBRC 15536 / NCIMB 2198 / 1H9).